A 100-amino-acid chain; its full sequence is MVPTTYYLALSGLLFALGMIGVLTRRTAIMVFLSVELMLNAANLSLVAFARAWGDLTGQTAVFIVMTLAAAEVAIGLAIIVAIFRKRETTNVDDLAGLKG.

3 helical membrane-spanning segments follow: residues 2 to 22 (VPTT…MIGV), 29 to 49 (IMVF…LVAF), and 63 to 83 (FIVM…IVAI).

The protein belongs to the complex I subunit 4L family. As to quaternary structure, NDH-1 is composed of 15 different subunits. Subunits NuoA, H, J, K, L, M, N constitute the membrane sector of the complex.

It localises to the cell membrane. The enzyme catalyses a quinone + NADH + 5 H(+)(in) = a quinol + NAD(+) + 4 H(+)(out). NDH-1 shuttles electrons from NADH, via FMN and iron-sulfur (Fe-S) centers, to quinones in the respiratory chain. The immediate electron acceptor for the enzyme in this species is believed to be a menaquinone. Couples the redox reaction to proton translocation (for every two electrons transferred, four hydrogen ions are translocated across the cytoplasmic membrane), and thus conserves the redox energy in a proton gradient. In Deinococcus deserti (strain DSM 17065 / CIP 109153 / LMG 22923 / VCD115), this protein is NADH-quinone oxidoreductase subunit K.